Consider the following 463-residue polypeptide: MVPALRYLVGACGRARGLFAGGSPGACGFASGRPRPLCGGSRSASTSSFDIVIVGGGIVGLASARALILRHPSLSIGVLEKEKDLAVHQTGHNSGVIHSGIYYKPESLKAKLCVQGAALLYEYCQQKGISYKQCGKLIVAVEQEEIPRLQALYEKGLQNGVPGLRLIQQEDIKKKEPYCRGLMAIDCPHTGIVDYRQVALSFAQDFQEAGGSVLTNFEVKGIEMAKESPSRSIDGMQYPIVIKNTKGEEIRCQYVVTCAGLYSDRISELSGCTPDPRIVPFRGDYLLLKPEKCYLVKGNIYPVPDSRFPFLGVHFTPRMDGSIWLGPNAVLAFKREGYRPFDFSATDVMDIIINSGLIKLASQNFSYGVTEMYKACFLGATVKYLQKFIPEITISDILRGPAGVRAQALDRDGNLVEDFVFDAGVGDIGNRILHVRNAPSPAATSSIAISGMIADEVQQRFEL.

A mitochondrion-targeting transit peptide spans Met1–Ile51. Residues Lys104, Lys155, and Lys173 each carry the N6-acetyllysine modification.

It belongs to the L2HGDH family. FAD is required as a cofactor. As to expression, widely expressed. Highly expressed in brain, testis and muscle. Expressed to a lower extent in lymphocytes, fibroblasts, keratinocytes, placenta, bladder, small intestine, liver and bone marrow.

It localises to the mitochondrion. The catalysed reaction is (S)-2-hydroxyglutarate + A = 2-oxoglutarate + AH2. The chain is L-2-hydroxyglutarate dehydrogenase, mitochondrial (L2HGDH) from Homo sapiens (Human).